An 889-amino-acid polypeptide reads, in one-letter code: Protein argonaute 15 (889 aa).

Disordered regions lie at residues 1 to 26 (MESHGDEGEPSAMAKPPKKLPMSRKG) and 119 to 150 (EDASSSGRTTTRRSSGGDDGSPGGSDRKRMKR). Positions 122-132 (SSSGRTTTRRS) are enriched in low complexity. A PAZ domain is found at 264-379 (PVIEFLLFNQ…IPLELCHLVP (116 aa)). Residues 546-853 (FVLCVLPERK…AAAQVSQFVR (308 aa)) form the Piwi domain. The interval 857–878 (AASEGSGDGGAPPRPVPELPRL) is disordered.

The protein belongs to the argonaute family. Ago subfamily.

Probably involved in the RNA silencing pathway. May bind to short RNAs such as microRNAs (miRNAs) or short interfering RNAs (siRNAs), and represses the translation of mRNAs which are complementary to them. The sequence is that of Protein argonaute 15 (AGO15) from Oryza sativa subsp. japonica (Rice).